Here is an 860-residue protein sequence, read N- to C-terminus: Probable linoleate 9S-lipoxygenase 4 (860 aa).

The 131-residue stretch at 29–159 (NALDFTDLAG…RYKSDRIFFA (131 aa)) folds into the PLAT domain. In terms of domain architecture, Lipoxygenase spans 162 to 860 (PYLPSETPEL…GKGIPNSVSI (699 aa)). The disordered stretch occupies residues 209–246 (PDQGKENVRTTLGGSADYPYPRRGRTGRPPTRTDPKSE). Fe cation contacts are provided by His-521, His-526, His-712, Asn-716, and Ile-860.

The protein belongs to the lipoxygenase family. In terms of assembly, monomer. Requires Fe cation as cofactor. As to expression, expressed in tubers and roots. Not detected in leaves, flowers, stems, shoot tips, or axillary buds.

The protein resides in the cytoplasm. It catalyses the reaction (9Z,12Z)-octadecadienoate + O2 = (9S)-hydroperoxy-(10E,12Z)-octadecadienoate. It participates in lipid metabolism; oxylipin biosynthesis. Its function is as follows. Plant lipoxygenases may be involved in a number of diverse aspects of plant physiology including growth and development, pest resistance, and senescence or responses to wounding. Catalyzes the hydroperoxidation of lipids containing a cis,cis-1,4-pentadiene structure. This is Probable linoleate 9S-lipoxygenase 4 (LOX1.4) from Solanum tuberosum (Potato).